We begin with the raw amino-acid sequence, 215 residues long: WAT1-related protein At3g28060 (215 aa).

The next 5 membrane-spanning stretches (helical) occupy residues 48–68, 82–102, 117–137, 146–166, and 176–196; these read IIIGSSGEVFWVEYTLIAVAY, FALALSHNVCVSISCAFVSLF, IMLICIVATGVVNSTSYVVES, VFLAMFRPLSIVTAVVLGAIF, and VIGGTLISIGFSVHNSLFHIA. The region spanning 65 to 186 is the EamA domain; the sequence is AVAYIVQTHI…IGGTLISIGF (122 aa).

Belongs to the drug/metabolite transporter (DMT) superfamily. Plant drug/metabolite exporter (P-DME) (TC 2.A.7.4) family.

Its subcellular location is the membrane. The protein is WAT1-related protein At3g28060 of Arabidopsis thaliana (Mouse-ear cress).